The chain runs to 36 residues: GPAQPTYPGDDAPVEDLVRFYDNLQQYLNVVTRHRY.

At tyrosine 36 the chain carries Tyrosine amide.

This sequence belongs to the NPY family.

Its subcellular location is the secreted. Functionally, hormone secreted by pancreatic cells that acts as a regulator of pancreatic and gastrointestinal functions. The sequence is that of Pancreatic polypeptide (PPY) from Struthio camelus (Common ostrich).